Here is a 487-residue protein sequence, read N- to C-terminus: 26S proteasome non-ATPase regulatory subunit 3 homolog B (487 aa).

The segment at 1-21 is disordered; sequence MTQDVEMKDNQTPTQSVVSAP. Residues 10–21 show a composition bias toward polar residues; sequence NQTPTQSVVSAP. The PCI domain occupies 239-420; that stretch reads CRYLFYLGKI…GCMVSKETGD (182 aa). The interval 452–487 is disordered; it reads PPNTHREKESEEKRREMKQQEEELAKYMAEEDDDDF. A compositionally biased stretch (basic and acidic residues) spans 455-480; sequence THREKESEEKRREMKQQEEELAKYMA.

The protein belongs to the proteasome subunit S3 family. As to quaternary structure, component of the 19S regulatory particle (RP/PA700) lid subcomplex of the 26S proteasome. The 26S proteasome is composed of a core protease (CP), known as the 20S proteasome, capped at one or both ends by the 19S regulatory particle (RP/PA700). The RP/PA700 complex is composed of at least 17 different subunits in two subcomplexes, the base and the lid, which form the portions proximal and distal to the 20S proteolytic core, respectively. Interacts with UCH1 and UCH2. In terms of tissue distribution, preferentially expressed in flowers.

Its function is as follows. Acts as a regulatory subunit of the 26 proteasome which is involved in the ATP-dependent degradation of ubiquitinated proteins. This chain is 26S proteasome non-ATPase regulatory subunit 3 homolog B, found in Arabidopsis thaliana (Mouse-ear cress).